Consider the following 268-residue polypeptide: Tropinone reductase homolog At2g29370 (268 aa).

Position 22 to 46 (22 to 46) interacts with NADP(+); sequence LVTGGSKGLGKAVVEELAMLGARVH. S155 lines the substrate pocket. The Proton acceptor role is filled by Y168.

It belongs to the short-chain dehydrogenases/reductases (SDR) family. SDR65C subfamily.

The protein is Tropinone reductase homolog At2g29370 of Arabidopsis thaliana (Mouse-ear cress).